A 318-amino-acid polypeptide reads, in one-letter code: Phospholipid scramblase 1 (318 aa).

A compositionally biased stretch (polar residues) spans Met-1 to Glu-14. Residues Met-1–Pro-64 form a disordered region. Residues Met-1–Pro-84 are proline-rich domain (PRD). Residues Met-1 to Lys-288 lie on the Cytoplasmic side of the membrane. The short motif at Pro-18–Pro-26 is the SH3-binding 1 element. Short sequence motifs (PPXY motif) lie at residues Pro-22–Tyr-25 and Pro-33–Tyr-36. The segment covering Gln-31–Val-44 has biased composition (low complexity). The SH3-binding 2 motif lies at Pro-42–Pro-50. Residues Tyr-69 and Tyr-74 each carry the phosphotyrosine; by ABL modification. Residues Pro-84–Pro-92 carry the SH3-binding 3 motif. The interaction with hepatitis C virus E2 glycoprotein stretch occupies residues Leu-99–Lys-290. Thr-161 carries the post-translational modification Phosphothreonine; by PKC/PRKCD. S-palmitoyl cysteine attachment occurs at residues Cys-184, Cys-185, Cys-186, Cys-188, and Cys-189. The Nuclear localization signal motif lies at Gly-257–Ile-266. A helical membrane pass occupies residues Met-289–Phe-305. Topologically, residues Glu-306 to Trp-318 are extracellular.

Belongs to the phospholipid scramblase family. As to quaternary structure, forms homooligomers in the presence of calcium. Interacts with ABL. Interacts with RELT, RELL1 and RELL2. Interacts with OXSR1 in the presence of RELT. Interacts with TOP2A and TOP2B. Interacts with OCLN. Interacts with TRPC5. Interacts with TRPC1 and TRPC4. Interacts with ILDR1. In terms of assembly, (Microbial infection) Interacts with hepatitis C virus E1 and E2 glycoproteins. (Microbial infection) Interacts with T-cell leukemia virus (HTLV)-1 protein Tax (via N-terminus); this interaction represses Tax homodimerization. As to quaternary structure, (Microbial infection) Interacts with HIV-1 protein Tat; this interaction represses the Tat-dependent transactivation of the HIV-1 long terminal repeat (LTR) and reduces the nuclear translocation of Tat. In terms of assembly, (Microbial infection) Interacts with hepatitis B virus protein HBx; this interaction promotes the proteasomal degradation of HBx. (Microbial infection) Interacts with human cytomegalovirus proteins IE1 and IE2. As to quaternary structure, (Microbial infection) Interacts with Epstein Barr virus (EBV) lytic switch protein BZLF1; this interaction negatively regulates the transcriptional regulatory activity of BZLF1 by preventing the formation of the BZLF1-CBP complex. In terms of assembly, (Microbial infection) Interacts with influenza virus nucleoprotein NP. Ca(2+) is required as a cofactor. Mg(2+) serves as cofactor. Requires Zn(2+) as cofactor. Phosphorylation at Thr-161 by PKC/PKCD increases its phospholipid scramblase activity during both cell stimulation and apoptosis. Phosphorylated by OXSR1 in the presence of RELT. In terms of processing, palmitoylation is required for its phospholipid scramblase activity. Palmitoylation regulates its localization to the cell membrane or the nucleus; trafficking to the cell membrane is dependent upon palmitoylation whereas in the absence of palmitoylation, localizes to the nucleus. Expressed in platelets, erythrocyte membranes, lymphocytes, spleen, thymus, prostate, testis, uterus, intestine, colon, heart, placenta, lung, liver, kidney and pancreas. Not detected in brain and skeletal muscle.

The protein resides in the cell membrane. It is found in the nucleus. The protein localises to the cytoplasm. It localises to the perinuclear region. The enzyme catalyses a 1,2-diacyl-sn-glycero-3-phosphocholine(in) = a 1,2-diacyl-sn-glycero-3-phosphocholine(out). The catalysed reaction is a 1,2-diacyl-sn-glycero-3-phosphoethanolamine(in) = a 1,2-diacyl-sn-glycero-3-phosphoethanolamine(out). It carries out the reaction a 1,2-diacyl-sn-glycero-3-phospho-L-serine(in) = a 1,2-diacyl-sn-glycero-3-phospho-L-serine(out). With respect to regulation, activated by Pb(2+) and Hg(2+) ions. Phosphorylation at Thr-161 by PKC/PKCD increases its phospholipid scramblase activity during both cell stimulation and apoptosis. In terms of biological role, catalyzes calcium-induced ATP-independent rapid bidirectional and non-specific movement of phospholipids (lipid scrambling or lipid flip-flop) between the inner and outer leaflet of the plasma membrane resulting in collapse of the phospholipid asymmetry which leads to phosphatidylserine externalization on the cell surface. Mediates calcium-dependent phosphatidylserine externalization and apoptosis in neurons via its association with TRPC5. Also exhibits magnesium-dependent nuclease activity against double-stranded DNA and RNA but not single-stranded DNA and can enhance DNA decatenation mediated by TOP2A. Negatively regulates FcR-mediated phagocytosis in differentiated macrophages. May contribute to cytokine-regulated cell proliferation and differentiation. May play a role in the antiviral response of interferon (IFN) by amplifying and enhancing the IFN response through increased expression of select subset of potent antiviral genes. Inhibits the functions of viral transactivators, including human T-cell leukemia virus (HTLV)-1 protein Tax, human immunodeficiency virus (HIV)-1 Tat, human hepatitis B virus (HBV) HBx, Epstein-Barr virus (EBV) BZLF1 and human cytomegalovirus IE1 and IE2 proteins through direct interactions. Also mediates the inhibition of influenza virus infection by preventing nuclear import of the viral nucleoprotein/NP. Plays a crucial role as a defense factor against SARS-CoV-2 independently of its scramblase activity by directly targeting nascent viral vesicles to prevent virus-membrane fusion and the release of viral RNA into the host-cell cytosol. (Microbial infection) Acts as an attachment receptor for HCV. The protein is Phospholipid scramblase 1 (PLSCR1) of Homo sapiens (Human).